The chain runs to 224 residues: Putative ankyrin repeat protein R845 (224 aa).

8 ANK repeats span residues 1-14, 15-44, 46-74, 75-104, 105-134, 136-164, 165-194, and 196-224; these read MVEY…DVRS, NYDH…DVSM, YDYI…DPRT, NNDK…DIRI, DNDS…DIRA, NDYS…DVRA, DNDY…DFRA, and NDCA…VCPY.

This is Putative ankyrin repeat protein R845 from Acanthamoeba polyphaga mimivirus (APMV).